The primary structure comprises 127 residues: Large ribosomal subunit protein bL12 (127 aa).

Positions 98-127 (PKPIKEGAPKAEAESLKSKLEEAGAEVELK) are disordered.

Belongs to the bacterial ribosomal protein bL12 family. Homodimer. Part of the ribosomal stalk of the 50S ribosomal subunit. Forms a multimeric L10(L12)X complex, where L10 forms an elongated spine to which 2 to 4 L12 dimers bind in a sequential fashion. Binds GTP-bound translation factors.

Forms part of the ribosomal stalk which helps the ribosome interact with GTP-bound translation factors. Is thus essential for accurate translation. The protein is Large ribosomal subunit protein bL12 of Amoebophilus asiaticus (strain 5a2).